A 539-amino-acid polypeptide reads, in one-letter code: Hydroxylamine reductase (539 aa).

4 residues coordinate [4Fe-4S] cluster: Cys-3, Cys-6, Cys-15, and Cys-21. His-235, Glu-259, Cys-303, Cys-394, Cys-422, Cys-447, Glu-482, and Lys-484 together coordinate hybrid [4Fe-2O-2S] cluster. The residue at position 394 (Cys-394) is a Cysteine persulfide.

The protein belongs to the HCP family. [4Fe-4S] cluster is required as a cofactor. Requires hybrid [4Fe-2O-2S] cluster as cofactor.

It localises to the cytoplasm. It carries out the reaction A + NH4(+) + H2O = hydroxylamine + AH2 + H(+). Catalyzes the reduction of hydroxylamine to form NH(3) and H(2)O. This is Hydroxylamine reductase from Methanocaldococcus jannaschii (strain ATCC 43067 / DSM 2661 / JAL-1 / JCM 10045 / NBRC 100440) (Methanococcus jannaschii).